The primary structure comprises 380 residues: Succinyl-diaminopimelate desuccinylase (380 aa).

Histidine 70 serves as a coordination point for Zn(2+). Aspartate 72 is a catalytic residue. Aspartate 104 serves as a coordination point for Zn(2+). The Proton acceptor role is filled by glutamate 138. Zn(2+)-binding residues include glutamate 139, glutamate 167, and histidine 353.

It belongs to the peptidase M20A family. DapE subfamily. In terms of assembly, homodimer. Zn(2+) is required as a cofactor. The cofactor is Co(2+).

It catalyses the reaction N-succinyl-(2S,6S)-2,6-diaminopimelate + H2O = (2S,6S)-2,6-diaminopimelate + succinate. It participates in amino-acid biosynthesis; L-lysine biosynthesis via DAP pathway; LL-2,6-diaminopimelate from (S)-tetrahydrodipicolinate (succinylase route): step 3/3. Catalyzes the hydrolysis of N-succinyl-L,L-diaminopimelic acid (SDAP), forming succinate and LL-2,6-diaminopimelate (DAP), an intermediate involved in the bacterial biosynthesis of lysine and meso-diaminopimelic acid, an essential component of bacterial cell walls. In Ectopseudomonas mendocina (strain ymp) (Pseudomonas mendocina), this protein is Succinyl-diaminopimelate desuccinylase.